The following is a 409-amino-acid chain: Elongation factor Tu (409 aa).

The tr-type G domain occupies Lys10–Glu214. The segment at Gly19–Thr26 is G1. Gly19–Thr26 is a binding site for GTP. Thr26 is a binding site for Mg(2+). Residues Gly60–Asn64 form a G2 region. The interval Asp81–Gly84 is G3. GTP contacts are provided by residues Asp81–His85 and Asn136–Asp139. Positions Asn136–Asp139 are G4. Positions Ser174 to Leu176 are G5.

It belongs to the TRAFAC class translation factor GTPase superfamily. Classic translation factor GTPase family. EF-Tu/EF-1A subfamily. As to quaternary structure, monomer.

Its subcellular location is the cytoplasm. It catalyses the reaction GTP + H2O = GDP + phosphate + H(+). Its function is as follows. GTP hydrolase that promotes the GTP-dependent binding of aminoacyl-tRNA to the A-site of ribosomes during protein biosynthesis. This is Elongation factor Tu from Thermosynechococcus vestitus (strain NIES-2133 / IAM M-273 / BP-1).